The primary structure comprises 143 residues: Large ribosomal subunit protein uL11 (143 aa).

Belongs to the universal ribosomal protein uL11 family. In terms of assembly, part of the ribosomal stalk of the 50S ribosomal subunit. Interacts with L10 and the large rRNA to form the base of the stalk. L10 forms an elongated spine to which L12 dimers bind in a sequential fashion forming a multimeric L10(L12)X complex. Post-translationally, one or more lysine residues are methylated.

Forms part of the ribosomal stalk which helps the ribosome interact with GTP-bound translation factors. This chain is Large ribosomal subunit protein uL11, found in Beutenbergia cavernae (strain ATCC BAA-8 / DSM 12333 / CCUG 43141 / JCM 11478 / NBRC 16432 / NCIMB 13614 / HKI 0122).